A 315-amino-acid polypeptide reads, in one-letter code: Acetyl-coenzyme A carboxylase carboxyl transferase subunit alpha (315 aa).

The 254-residue stretch at 36–289 (LSKKRLELME…RKAVAAELKI (254 aa)) folds into the CoA carboxyltransferase C-terminal domain.

It belongs to the AccA family. In terms of assembly, acetyl-CoA carboxylase is a heterohexamer composed of biotin carboxyl carrier protein (AccB), biotin carboxylase (AccC) and two subunits each of ACCase subunit alpha (AccA) and ACCase subunit beta (AccD).

Its subcellular location is the cytoplasm. It catalyses the reaction N(6)-carboxybiotinyl-L-lysyl-[protein] + acetyl-CoA = N(6)-biotinyl-L-lysyl-[protein] + malonyl-CoA. It participates in lipid metabolism; malonyl-CoA biosynthesis; malonyl-CoA from acetyl-CoA: step 1/1. In terms of biological role, component of the acetyl coenzyme A carboxylase (ACC) complex. First, biotin carboxylase catalyzes the carboxylation of biotin on its carrier protein (BCCP) and then the CO(2) group is transferred by the carboxyltransferase to acetyl-CoA to form malonyl-CoA. This chain is Acetyl-coenzyme A carboxylase carboxyl transferase subunit alpha, found in Francisella tularensis subsp. holarctica (strain FTNF002-00 / FTA).